The primary structure comprises 271 residues: 4-hydroxy-tetrahydrodipicolinate reductase (271 aa).

NAD(+)-binding positions include glycine 10 to methionine 15, glutamate 36, glycine 100 to threonine 102, and serine 124 to methionine 127. Residue histidine 157 is the Proton donor/acceptor of the active site. Histidine 158 provides a ligand contact to (S)-2,3,4,5-tetrahydrodipicolinate. The active-site Proton donor is the lysine 161. Glycine 167–threonine 168 contributes to the (S)-2,3,4,5-tetrahydrodipicolinate binding site.

The protein belongs to the DapB family.

Its subcellular location is the cytoplasm. It catalyses the reaction (S)-2,3,4,5-tetrahydrodipicolinate + NAD(+) + H2O = (2S,4S)-4-hydroxy-2,3,4,5-tetrahydrodipicolinate + NADH + H(+). The catalysed reaction is (S)-2,3,4,5-tetrahydrodipicolinate + NADP(+) + H2O = (2S,4S)-4-hydroxy-2,3,4,5-tetrahydrodipicolinate + NADPH + H(+). It functions in the pathway amino-acid biosynthesis; L-lysine biosynthesis via DAP pathway; (S)-tetrahydrodipicolinate from L-aspartate: step 4/4. Functionally, catalyzes the conversion of 4-hydroxy-tetrahydrodipicolinate (HTPA) to tetrahydrodipicolinate. The sequence is that of 4-hydroxy-tetrahydrodipicolinate reductase from Rhodopseudomonas palustris (strain ATCC BAA-98 / CGA009).